We begin with the raw amino-acid sequence, 956 residues long: DNA repair endonuclease UVH1 (956 aa).

The short motif at 256–272 (RRQLDPIWHTLGKRTKQ) is the Nuclear localization signal element. Disordered stretches follow at residues 343 to 363 (HVKN…SVEA), 516 to 593 (TTDM…RPSG), and 697 to 718 (SSTE…GGRK). Residues 697-711 (SSTEFPASSTQNSLT) show a composition bias toward polar residues. An ERCC4 domain is found at 725-805 (QVIVDMREFM…IPVLLIEFSQ (81 aa)).

Belongs to the XPF family. Heterodimer with ERCC1/RAD10. In terms of tissue distribution, isoform 1 and isoform 2 are widely expressed, predominantly in flowers, meristems and stems. Isoform 3 is detected at low levels.

It localises to the nucleus. Functionally, seems to be involved in nucleotide excision repair (NER) of damaged DNA (dark repair mechanism). Involved in repair of UV light, and probably oxidative damage. The UVH1/RAD1-ERCC1/RAD10 complex may act as an endonuclease making DNA incision 5' to the lesion site. In vitro, is implicated in double strand breaks (DSBs) repair and is required for homologous recombination in the presence of non-homologous overhangs. May mediate the induction of a DNA-damage sensitive cell-cycle checkpoint during the G2 phase. In Arabidopsis thaliana (Mouse-ear cress), this protein is DNA repair endonuclease UVH1 (UVH1).